Reading from the N-terminus, the 227-residue chain is MTARPLNELVEEGWARALEPVADQVAQMGEFLRTELAEGRQYLPAGQNVLRAFTFPFDQVRVLIVGQDPYPTPGHAVGLSFSVAPDVRPLPRSLSNIFTEYTEDLGHPQPSSGDLTPWAERGVMLLNRVLTVRPGTPASHRGKGWEAVTECAIRALVAREQPLVAVLWGRDAATLKPMLAEGDCATIESPHPSPLSASRGFFGSRPFSRVNELLQRRGIEPIDWKLP.

Asp68 serves as the catalytic Proton acceptor.

The protein belongs to the uracil-DNA glycosylase (UDG) superfamily. UNG family.

The protein resides in the cytoplasm. The enzyme catalyses Hydrolyzes single-stranded DNA or mismatched double-stranded DNA and polynucleotides, releasing free uracil.. Its function is as follows. Excises uracil residues from the DNA which can arise as a result of misincorporation of dUMP residues by DNA polymerase or due to deamination of cytosine. This Mycolicibacterium smegmatis (strain ATCC 700084 / mc(2)155) (Mycobacterium smegmatis) protein is Uracil-DNA glycosylase.